The primary structure comprises 354 residues: Ornithine carbamoyltransferase, catabolic (354 aa).

Residues 67-70 (STRT), Q94, R118, and 145-148 (HPTQ) each bind carbamoyl phosphate. L-ornithine contacts are provided by residues N177, D241, and 245–246 (SM). Carbamoyl phosphate is bound by residues 284 to 285 (CL) and R329.

This sequence belongs to the aspartate/ornithine carbamoyltransferase superfamily. OTCase family.

The protein resides in the cytoplasm. The enzyme catalyses carbamoyl phosphate + L-ornithine = L-citrulline + phosphate + H(+). It participates in amino-acid degradation; L-arginine degradation via ADI pathway; carbamoyl phosphate from L-arginine: step 2/2. Reversibly catalyzes the transfer of the carbamoyl group from carbamoyl phosphate (CP) to the N(epsilon) atom of ornithine (ORN) to produce L-citrulline. The chain is Ornithine carbamoyltransferase, catabolic (arcB) from Lactococcus lactis subsp. lactis (strain IL1403) (Streptococcus lactis).